The chain runs to 411 residues: Argininosuccinate lyase (411 aa).

Belongs to the lyase 1 family. Argininosuccinate lyase subfamily.

The protein localises to the cytoplasm. The catalysed reaction is 2-(N(omega)-L-arginino)succinate = fumarate + L-arginine. It functions in the pathway amino-acid biosynthesis; L-arginine biosynthesis; L-arginine from L-ornithine and carbamoyl phosphate: step 3/3. The sequence is that of Argininosuccinate lyase from Legionella pneumophila subsp. pneumophila (strain Philadelphia 1 / ATCC 33152 / DSM 7513).